Consider the following 782-residue polypeptide: Polyribonucleotide nucleotidyltransferase (782 aa).

Mg(2+)-binding residues include D514 and D520. One can recognise a KH domain in the interval 580–639 (PRIITIKIPVDQIGAVIGPKGKIINQIQDDTGAEITIEDDGTIYIGATEGTAAEAARAAI). Residues 651-723 (GERYLGTVVK…ARGKLSLVPV (73 aa)) form the S1 motif domain. Residues 734-753 (AGAGESAASGGAPRSAGGPQ) are compositionally biased toward low complexity. The interval 734–782 (AGAGESAASGGAPRSAGGPQPREHQGPGRPRGRGGDHGGEGRQRTRRRH) is disordered. Positions 766–776 (RGGDHGGEGRQ) are enriched in basic and acidic residues.

This sequence belongs to the polyribonucleotide nucleotidyltransferase family. It depends on Mg(2+) as a cofactor.

It is found in the cytoplasm. It carries out the reaction RNA(n+1) + phosphate = RNA(n) + a ribonucleoside 5'-diphosphate. Functionally, involved in mRNA degradation. Catalyzes the phosphorolysis of single-stranded polyribonucleotides processively in the 3'- to 5'-direction. This Acidothermus cellulolyticus (strain ATCC 43068 / DSM 8971 / 11B) protein is Polyribonucleotide nucleotidyltransferase.